The sequence spans 484 residues: Aspartyl/glutamyl-tRNA(Asn/Gln) amidotransferase subunit B (484 aa).

The protein belongs to the GatB/GatE family. GatB subfamily. In terms of assembly, heterotrimer of A, B and C subunits.

It carries out the reaction L-glutamyl-tRNA(Gln) + L-glutamine + ATP + H2O = L-glutaminyl-tRNA(Gln) + L-glutamate + ADP + phosphate + H(+). It catalyses the reaction L-aspartyl-tRNA(Asn) + L-glutamine + ATP + H2O = L-asparaginyl-tRNA(Asn) + L-glutamate + ADP + phosphate + 2 H(+). Its function is as follows. Allows the formation of correctly charged Asn-tRNA(Asn) or Gln-tRNA(Gln) through the transamidation of misacylated Asp-tRNA(Asn) or Glu-tRNA(Gln) in organisms which lack either or both of asparaginyl-tRNA or glutaminyl-tRNA synthetases. The reaction takes place in the presence of glutamine and ATP through an activated phospho-Asp-tRNA(Asn) or phospho-Glu-tRNA(Gln). This Anaeromyxobacter sp. (strain K) protein is Aspartyl/glutamyl-tRNA(Asn/Gln) amidotransferase subunit B.